We begin with the raw amino-acid sequence, 305 residues long: Transcription factor bHLH18 (305 aa).

The tract at residues 41-67 (LKTTHISPNLHPFSSSNPPPPKHQPSS) is disordered. Residues 44–56 (THISPNLHPFSSS) are compositionally biased toward polar residues. The region spanning 122–171 (SNAQDHILAERKRREKLTQRFVALSALIPGLKKMDKASVLGDAIKHIKYL) is the bHLH domain. Positions 201–224 (DENHQPSSSSSSDGNRNSSSSNLP) are disordered. Low complexity predominate over residues 207–222 (SSSSSSDGNRNSSSSN).

As to quaternary structure, homodimer. As to expression, expressed in roots.

The protein resides in the nucleus. In Arabidopsis thaliana (Mouse-ear cress), this protein is Transcription factor bHLH18 (BHLH18).